Consider the following 171-residue polypeptide: Small ribosomal subunit protein uS4 (171 aa).

The S4 RNA-binding domain maps to 103-167 (RRLQTLVHKR…SPMKKQIEAA (65 aa)).

Belongs to the universal ribosomal protein uS4 family. In terms of assembly, part of the 30S ribosomal subunit. Contacts protein S5. The interaction surface between S4 and S5 is involved in control of translational fidelity.

Functionally, one of the primary rRNA binding proteins, it binds directly to 16S rRNA where it nucleates assembly of the body of the 30S subunit. In terms of biological role, with S5 and S12 plays an important role in translational accuracy. In Methanothermobacter thermautotrophicus (strain ATCC 29096 / DSM 1053 / JCM 10044 / NBRC 100330 / Delta H) (Methanobacterium thermoautotrophicum), this protein is Small ribosomal subunit protein uS4.